The sequence spans 353 residues: S-adenosylmethionine:tRNA ribosyltransferase-isomerase (353 aa).

It belongs to the QueA family. Monomer.

It is found in the cytoplasm. The enzyme catalyses 7-aminomethyl-7-carbaguanosine(34) in tRNA + S-adenosyl-L-methionine = epoxyqueuosine(34) in tRNA + adenine + L-methionine + 2 H(+). It participates in tRNA modification; tRNA-queuosine biosynthesis. Transfers and isomerizes the ribose moiety from AdoMet to the 7-aminomethyl group of 7-deazaguanine (preQ1-tRNA) to give epoxyqueuosine (oQ-tRNA). This Paraburkholderia phymatum (strain DSM 17167 / CIP 108236 / LMG 21445 / STM815) (Burkholderia phymatum) protein is S-adenosylmethionine:tRNA ribosyltransferase-isomerase.